Consider the following 44-residue polypeptide: Putative keratin-associated protein 20-4 (44 aa).

It belongs to the KRTAP type 20 family. As to quaternary structure, interacts with hair keratins.

Its function is as follows. In the hair cortex, hair keratin intermediate filaments are embedded in an interfilamentous matrix, consisting of hair keratin-associated proteins (KRTAP), which are essential for the formation of a rigid and resistant hair shaft through their extensive disulfide bond cross-linking with abundant cysteine residues of hair keratins. The matrix proteins include the high-sulfur and high-glycine-tyrosine keratins. The protein is Putative keratin-associated protein 20-4 (KRTAP20-4) of Homo sapiens (Human).